A 249-amino-acid chain; its full sequence is Probable septum site-determining protein MinC (249 aa).

Positions 89 to 130 (SLFEPGMPPAMKGGRPAPDFEVPEVDPADPPKAGKGKAAAPI) are disordered. Residues 119 to 129 (PKAGKGKAAAP) are compositionally biased toward low complexity.

The protein belongs to the MinC family. As to quaternary structure, interacts with MinD and FtsZ.

Cell division inhibitor that blocks the formation of polar Z ring septums. Rapidly oscillates between the poles of the cell to destabilize FtsZ filaments that have formed before they mature into polar Z rings. Prevents FtsZ polymerization. This chain is Probable septum site-determining protein MinC, found in Rhizobium meliloti (strain 1021) (Ensifer meliloti).